The primary structure comprises 225 residues: MNLIEFPLLDQTSSNSVISTTLNDLSNWSRLSSLWPLLYGTSCCFIEFASLIGSRFDFDRYGLVPRSSPRQADLILTAGTVTMKMAPSLVRLYEQMPEPKYVIAMGACTITGGMFSTDSYSTVRGVDKLIPVDVYLPGCPPKPEAVIDALTKLRKKISREIVEDRTLSQNKKRCFTTSHKLYVRRSTHTGTYEQELLYQSPSTLDISSETFLKSKSPVPSYKLVN.

[4Fe-4S] cluster is bound by residues Cys43, Cys44, Cys108, and Cys139.

Belongs to the complex I 20 kDa subunit family. In terms of assembly, NDH is composed of at least 16 different subunits, 5 of which are encoded in the nucleus. Requires [4Fe-4S] cluster as cofactor.

It is found in the plastid. Its subcellular location is the chloroplast thylakoid membrane. It catalyses the reaction a plastoquinone + NADH + (n+1) H(+)(in) = a plastoquinol + NAD(+) + n H(+)(out). The catalysed reaction is a plastoquinone + NADPH + (n+1) H(+)(in) = a plastoquinol + NADP(+) + n H(+)(out). In terms of biological role, NDH shuttles electrons from NAD(P)H:plastoquinone, via FMN and iron-sulfur (Fe-S) centers, to quinones in the photosynthetic chain and possibly in a chloroplast respiratory chain. The immediate electron acceptor for the enzyme in this species is believed to be plastoquinone. Couples the redox reaction to proton translocation, and thus conserves the redox energy in a proton gradient. The chain is NAD(P)H-quinone oxidoreductase subunit K, chloroplastic from Hordeum vulgare (Barley).